The primary structure comprises 247 residues: ATP synthase subunit a, chloroplastic (247 aa).

5 consecutive transmembrane segments (helical) span residues 38 to 58 (QVLITSWVVIAILLGSVTLAV), 95 to 115 (VPFIGTMFLFIFVSNWSGALL), 134 to 154 (INTTVALALLTSVAYFYAGLS), 199 to 219 (LVVVVLVSLVPLVVPIPVMFL), and 220 to 240 (GLFTSGIQALIFATLAAAYIG).

It belongs to the ATPase A chain family. In terms of assembly, F-type ATPases have 2 components, CF(1) - the catalytic core - and CF(0) - the membrane proton channel. CF(1) has five subunits: alpha(3), beta(3), gamma(1), delta(1), epsilon(1). CF(0) has four main subunits: a, b, b' and c.

It localises to the plastid. The protein resides in the chloroplast thylakoid membrane. In terms of biological role, key component of the proton channel; it plays a direct role in the translocation of protons across the membrane. This chain is ATP synthase subunit a, chloroplastic, found in Lemna minor (Common duckweed).